The following is a 147-amino-acid chain: Hemoglobin subunit beta (147 aa).

Residues 3–147 (HWTAEEKQLI…VAHALARKYH (145 aa)) form the Globin domain. Heme b is bound by residues H64 and H93.

This sequence belongs to the globin family. Heterotetramer of two alpha chains and two beta chains. As to expression, red blood cells.

In terms of biological role, involved in oxygen transport from the lung to the various peripheral tissues. This chain is Hemoglobin subunit beta (HBB), found in Cairina moschata (Muscovy duck).